A 760-amino-acid chain; its full sequence is 5-methyltetrahydropteroyltriglutamate--homocysteine methyltransferase (760 aa).

5-methyltetrahydropteroyltri-L-glutamate contacts are provided by residues 17-20 (RELK) and K113. L-homocysteine contacts are provided by residues 433-435 (IGS) and E486. Residues 433–435 (IGS) and E486 contribute to the L-methionine site. Residues 517-518 (RC) and W563 contribute to the 5-methyltetrahydropteroyltri-L-glutamate site. D601 is an L-homocysteine binding site. An L-methionine-binding site is contributed by D601. E607 contacts 5-methyltetrahydropteroyltri-L-glutamate. Zn(2+) contacts are provided by H643, C645, and E667. The Proton donor role is filled by H696. Residue C728 coordinates Zn(2+).

Belongs to the vitamin-B12 independent methionine synthase family. Zn(2+) is required as a cofactor.

It carries out the reaction 5-methyltetrahydropteroyltri-L-glutamate + L-homocysteine = tetrahydropteroyltri-L-glutamate + L-methionine. Its pathway is amino-acid biosynthesis; L-methionine biosynthesis via de novo pathway; L-methionine from L-homocysteine (MetE route): step 1/1. Catalyzes the transfer of a methyl group from 5-methyltetrahydrofolate to homocysteine resulting in methionine formation. This Chromobacterium violaceum (strain ATCC 12472 / DSM 30191 / JCM 1249 / CCUG 213 / NBRC 12614 / NCIMB 9131 / NCTC 9757 / MK) protein is 5-methyltetrahydropteroyltriglutamate--homocysteine methyltransferase.